Here is a 257-residue protein sequence, read N- to C-terminus: 8-demethyl-8-aminoriboflavin-5'-phosphate synthase (257 aa).

Residues 11-13, 19-21, 91-94, 132-136, and tyrosine 240 each bind FMN; these read TLR, SQT, ITLN, and CGNED.

This sequence belongs to the SsuE family. In terms of assembly, homotetramer.

It carries out the reaction FMN + L-glutamate + 3 A + O2 + H2O = 8-amino-8-demethylriboflavin 5'-phosphate + 2-oxoglutarate + 3 AH2 + CO2 + H(+). Its pathway is antibiotic biosynthesis. Its function is as follows. Involved in the biosynthesis of the riboflavin analog antibiotic roseoflavin (3,8-dimethylamino-riboflavin). Catalyzes the site-specific substitution of the C-8 methyl group of riboflavin-5'-phosphate (FMN) by an amino group to yield 8-amino-8-demethylriboflavin 5'-phosphate, via a combined oxidation, decarboxylation and transamination reaction. The catalysis is initiated by an oxidation step in which the C-8 methyl group on the dimethylbenzene ring of FMN is converted to a formyl group to yield the 8-demethyl-8-formylriboflavin-5'-phosphate (OHC-RP) intermediate. In the presence of thiamine, the formyl group is oxidized into a carboxyl group to yield the 8-demethyl-8-carboxyriboflavin-5'-phosphate (HO2C-RP) intermediate. Finally, in the presence of L-glutamate as an amino donor, decarboxylation and aminotransfer occur, resulting in production of 8-demethyl-8-aminoriboflavin-5'-phosphate. Addition of NAD (but not NADP) to the reaction increases the yield 1.7-fold. The reaction also proceeds without the addition of any electron acceptor, and it is possible that molecular oxygen serves this role. The chain is 8-demethyl-8-aminoriboflavin-5'-phosphate synthase from Streptomyces davaonensis (strain DSM 101723 / JCM 4913 / KCC S-0913 / 768).